Consider the following 188-residue polypeptide: dCTP deaminase (188 aa).

Residues 111–116, 135–137, glutamine 156, tyrosine 170, and glutamine 180 contribute to the dCTP site; these read KSTYAR and TLE. The active-site Proton donor/acceptor is glutamate 137.

Belongs to the dCTP deaminase family. Homotrimer.

The catalysed reaction is dCTP + H2O + H(+) = dUTP + NH4(+). The protein operates within pyrimidine metabolism; dUMP biosynthesis; dUMP from dCTP (dUTP route): step 1/2. Its function is as follows. Catalyzes the deamination of dCTP to dUTP. In Pseudomonas putida (strain W619), this protein is dCTP deaminase.